The sequence spans 159 residues: MLFQLNIVFKELKNPDFFFFFFFFSLPLSSFKLNLSSSSSFKLWLIVFLLDFGEIMFPAPPLPIANFSGALLPLSLFLGFLDVDLIAAKALPLEVTTNRLSSFALIVSSSSILPPRISSSSFPPLLATFFLLKKMFPAPPLPTTIGALLFGDEVVACKD.

3 helical membrane-spanning segments follow: residues 17 to 37, 44 to 64, and 67 to 87; these read FFFFFFFFSLPLSSFKLNLSS, WLIVFLLDFGEIMFPAPPLPI, and FSGALLPLSLFLGFLDVDLIA.

The protein localises to the membrane. This is an uncharacterized protein from Saccharomyces cerevisiae (strain ATCC 204508 / S288c) (Baker's yeast).